Consider the following 717-residue polypeptide: Glutamate--cysteine ligase (717 aa).

The tract at residues 484–576 is disordered; it reads SKTTEQRAAK…TDSDHTDTDD (93 aa). Low complexity-rich tracts occupy residues 492–518 and 551–567; these read AKAQ…NGNG and GTTN…SNGT.

Belongs to the glutamate--cysteine ligase type 3 family.

It catalyses the reaction L-cysteine + L-glutamate + ATP = gamma-L-glutamyl-L-cysteine + ADP + phosphate + H(+). The catalysed reaction is (2S)-2-aminobutanoate + L-glutamate + ATP = gamma-L-glutamyl-(2S)-2-aminobutanoate + ADP + phosphate + H(+). The protein operates within sulfur metabolism; glutathione biosynthesis; glutathione from L-cysteine and L-glutamate: step 1/2. Its function is as follows. Catalyzes the ATP-dependent ligation of L-glutamate and L-cysteine and participates in the first and rate-limiting step in glutathione biosynthesis. This is Glutamate--cysteine ligase from Drosophila melanogaster (Fruit fly).